Consider the following 157-residue polypeptide: Small ribosomal subunit protein uS7 (157 aa).

It belongs to the universal ribosomal protein uS7 family. Part of the 30S ribosomal subunit. Contacts proteins S9 and S11.

Its function is as follows. One of the primary rRNA binding proteins, it binds directly to 16S rRNA where it nucleates assembly of the head domain of the 30S subunit. Is located at the subunit interface close to the decoding center, probably blocks exit of the E-site tRNA. The sequence is that of Small ribosomal subunit protein uS7 from Chlamydia felis (strain Fe/C-56) (Chlamydophila felis).